The sequence spans 216 residues: ATP-dependent Clp protease proteolytic subunit (216 aa).

Serine 120 serves as the catalytic Nucleophile. Residue histidine 145 is part of the active site.

Belongs to the peptidase S14 family. In terms of assembly, fourteen ClpP subunits assemble into 2 heptameric rings which stack back to back to give a disk-like structure with a central cavity, resembling the structure of eukaryotic proteasomes.

Its subcellular location is the cytoplasm. The enzyme catalyses Hydrolysis of proteins to small peptides in the presence of ATP and magnesium. alpha-casein is the usual test substrate. In the absence of ATP, only oligopeptides shorter than five residues are hydrolyzed (such as succinyl-Leu-Tyr-|-NHMec, and Leu-Tyr-Leu-|-Tyr-Trp, in which cleavage of the -Tyr-|-Leu- and -Tyr-|-Trp bonds also occurs).. In terms of biological role, cleaves peptides in various proteins in a process that requires ATP hydrolysis. Has a chymotrypsin-like activity. Plays a major role in the degradation of misfolded proteins. The sequence is that of ATP-dependent Clp protease proteolytic subunit from Cupriavidus metallidurans (strain ATCC 43123 / DSM 2839 / NBRC 102507 / CH34) (Ralstonia metallidurans).